A 172-amino-acid polypeptide reads, in one-letter code: Epithelial membrane protein 2 (172 aa).

The next 4 membrane-spanning stretches (helical) occupy residues Met1–Ile21, Thr72–Phe92, Phe100–Val120, and Phe148–Leu168.

It belongs to the PMP-22/EMP/MP20 family. In terms of assembly, interacts with PTK2; regulates PTK2 activation and localization. Interacts with ITGB3; regulates the levels of the heterodimer ITGA5-ITGB3 integrin surface expression. Interacts with P2RX7 (via C-terminus). Interacts with ITGB1; the interaction may be direct or indirect and ITGB1 has a heterodimer form. Expressed in glomeruli.

The protein localises to the golgi apparatus membrane. It localises to the cell membrane. The protein resides in the apical cell membrane. Its subcellular location is the membrane raft. It is found in the cytoplasm. The protein localises to the nucleus. It localises to the perinuclear region. Functionally, functions as a key regulator of cell membrane composition by regulating protein surface expression. Also, plays a role in regulation of processes including cell migration, cell proliferation, cell contraction and cell adhesion. Regulates transepithelial migration of neutrophils into the alveolar lumen, potentially via mediation of cell surface expression of adhesion markers and lipid raft formation. Negatively regulates caveolae formation by reducing CAV1 expression and CAV1 amount by increasing lysosomal degradation. Facilitates surface trafficking and the formation of lipid rafts bearing GPI-anchor proteins. Regulates surface expression of MHC1 and ICAM1 proteins increasing susceptibility to T-cell mediated cytotoxicity. Regulates the plasma membrane expression of the integrin heterodimers ITGA6-ITGB1, ITGA5-ITGB3 and ITGA5-ITGB1 resulting in modulation of cell-matrix adhesion. Also regulates many processes through PTK2. Regulates blood vessel endothelial cell migration and angiogenesis by regulating VEGF protein expression through PTK2 activation. Regulates cell migration and cell contraction through PTK2 and SRC activation. Regulates focal adhesion density, F-actin conformation and cell adhesion capacity through interaction with PTK2. Positively regulates cell proliferation. Plays a role during cell death and cell blebbing. Promotes angiogenesis and vasculogenesis through induction of VEGFA via a HIF1A-dependent pathway. Also plays a role in embryo implantation by regulating surface trafficking of integrin heterodimer ITGA5-ITGB3. Plays a role in placental angiogenesis and uterine natural killer cell regulation at the maternal-fetal placental interface, however not required in the maternal tissues for a viable pregnancy. Involved in the early stages of embryogenic development and cardiogenesis, potentially via regulation of epithelial-mesenchymal transition timing. May play a role in glomerular filtration. This Rattus norvegicus (Rat) protein is Epithelial membrane protein 2 (Emp2).